Here is a 704-residue protein sequence, read N- to C-terminus: Probable serine/threonine-protein kinase WNK1 (704 aa).

The Protein kinase domain occupies Gly-27–Leu-284. Residues Thr-107–Phe-110 and Lys-157 contribute to the ATP site. Residue Asp-174 is the Proton acceptor of the active site. The disordered stretch occupies residues Gln-499 to Asp-521.

Belongs to the protein kinase superfamily. Ser/Thr protein kinase family. WNK subfamily.

It carries out the reaction L-seryl-[protein] + ATP = O-phospho-L-seryl-[protein] + ADP + H(+). The enzyme catalyses L-threonyl-[protein] + ATP = O-phospho-L-threonyl-[protein] + ADP + H(+). The sequence is that of Probable serine/threonine-protein kinase WNK1 (WNK1) from Oryza sativa subsp. japonica (Rice).